A 470-amino-acid chain; its full sequence is UDP-glycosyltransferase 91A1 (470 aa).

UDP-alpha-D-glucose contacts are provided by residues serine 290, 350–352 (VEQ), 367–375 (HPGWGTIIE), and 389–392 (VYDQ).

Belongs to the UDP-glycosyltransferase family.

The chain is UDP-glycosyltransferase 91A1 (UGT91A1) from Arabidopsis thaliana (Mouse-ear cress).